The sequence spans 380 residues: uncharacterized protein (380 aa).

A run of 9 helical transmembrane segments spans residues Leu-15 to Pro-35, Leu-45 to Phe-65, Ile-75 to Thr-95, Leu-98 to Phe-118, Ile-123 to Tyr-143, Ile-182 to Ile-202, Met-217 to Leu-237, Gly-303 to Ile-323, and Leu-341 to Leu-361.

Its subcellular location is the cell membrane. This is an uncharacterized protein from Methanocaldococcus jannaschii (strain ATCC 43067 / DSM 2661 / JAL-1 / JCM 10045 / NBRC 100440) (Methanococcus jannaschii).